Here is a 433-residue protein sequence, read N- to C-terminus: Zuotin (433 aa).

The residue at position 50 (Ser-50) is a Phosphoserine. In terms of domain architecture, J spans Leu-98 to Val-170. Positions Glu-292 to Ala-330 are enriched in basic and acidic residues. The disordered stretch occupies residues Glu-292–Ala-357.

In terms of assembly, RAC is a heterodimer of the Hsp70/DnaK-type chaperone SSZ1 and the Hsp40/DnaJ-type chaperone ZUO1. RAC associates with ribosomes via ZUO1.

It localises to the cytoplasm. Its function is as follows. Component of the ribosome-associated complex (RAC), a heterodimeric chaperone complex involved in regulation of accurate translation termination and in folding or maintaining nascent polypeptides in a folding-competent state. RAC stimulates the ATPase activity of the ribosome-associated pool of Hsp70-type chaperones SSB1/SSB2 that bind to the nascent polypeptide chain. ZUO1 can act as a J-protein for SSB1/SSB2 only when associated with SSZ1. This is Zuotin (ZUO1) from Saccharomyces cerevisiae (strain ATCC 204508 / S288c) (Baker's yeast).